The sequence spans 142 residues: Large ribosomal subunit protein uL13 (142 aa).

It belongs to the universal ribosomal protein uL13 family. Part of the 50S ribosomal subunit.

In terms of biological role, this protein is one of the early assembly proteins of the 50S ribosomal subunit, although it is not seen to bind rRNA by itself. It is important during the early stages of 50S assembly. The protein is Large ribosomal subunit protein uL13 of Methanosphaera stadtmanae (strain ATCC 43021 / DSM 3091 / JCM 11832 / MCB-3).